A 296-amino-acid polypeptide reads, in one-letter code: Ribonuclease HIII (296 aa).

The RNase H type-2 domain occupies 81–296 (QAMIGTDEVG…TQKAKQLLER (216 aa)). 3 residues coordinate a divalent metal cation: Asp-87, Glu-88, and Asp-190.

This sequence belongs to the RNase HII family. RnhC subfamily. Requires Mn(2+) as cofactor. It depends on Mg(2+) as a cofactor.

Its subcellular location is the cytoplasm. It carries out the reaction Endonucleolytic cleavage to 5'-phosphomonoester.. Endonuclease that specifically degrades the RNA of RNA-DNA hybrids. In Streptococcus gordonii (strain Challis / ATCC 35105 / BCRC 15272 / CH1 / DL1 / V288), this protein is Ribonuclease HIII.